Here is a 327-residue protein sequence, read N- to C-terminus: Lipoyl synthase (327 aa).

Residues C66, C71, C77, C92, C96, C99, and S306 each coordinate [4Fe-4S] cluster. A Radical SAM core domain is found at 78–295 (FSKGTATFMI…EKEAYELGFT (218 aa)).

The protein belongs to the radical SAM superfamily. Lipoyl synthase family. [4Fe-4S] cluster serves as cofactor.

It is found in the cytoplasm. It carries out the reaction [[Fe-S] cluster scaffold protein carrying a second [4Fe-4S](2+) cluster] + N(6)-octanoyl-L-lysyl-[protein] + 2 oxidized [2Fe-2S]-[ferredoxin] + 2 S-adenosyl-L-methionine + 4 H(+) = [[Fe-S] cluster scaffold protein] + N(6)-[(R)-dihydrolipoyl]-L-lysyl-[protein] + 4 Fe(3+) + 2 hydrogen sulfide + 2 5'-deoxyadenosine + 2 L-methionine + 2 reduced [2Fe-2S]-[ferredoxin]. It participates in protein modification; protein lipoylation via endogenous pathway; protein N(6)-(lipoyl)lysine from octanoyl-[acyl-carrier-protein]: step 2/2. Catalyzes the radical-mediated insertion of two sulfur atoms into the C-6 and C-8 positions of the octanoyl moiety bound to the lipoyl domains of lipoate-dependent enzymes, thereby converting the octanoylated domains into lipoylated derivatives. This chain is Lipoyl synthase, found in Neisseria gonorrhoeae (strain ATCC 700825 / FA 1090).